The following is a 317-amino-acid chain: tRNA dimethylallyltransferase (317 aa).

Position 14-21 (14-21 (GPTAVGKT)) interacts with ATP. 16 to 21 (TAVGKT) contacts substrate. Residues 39-42 (DSMQ) form an interaction with substrate tRNA region.

Belongs to the IPP transferase family. As to quaternary structure, monomer. Requires Mg(2+) as cofactor.

The enzyme catalyses adenosine(37) in tRNA + dimethylallyl diphosphate = N(6)-dimethylallyladenosine(37) in tRNA + diphosphate. Catalyzes the transfer of a dimethylallyl group onto the adenine at position 37 in tRNAs that read codons beginning with uridine, leading to the formation of N6-(dimethylallyl)adenosine (i(6)A). In Bacillus thuringiensis subsp. konkukian (strain 97-27), this protein is tRNA dimethylallyltransferase.